The chain runs to 121 residues: Large ribosomal subunit protein bL20 (121 aa).

The protein belongs to the bacterial ribosomal protein bL20 family.

Its function is as follows. Binds directly to 23S ribosomal RNA and is necessary for the in vitro assembly process of the 50S ribosomal subunit. It is not involved in the protein synthesizing functions of that subunit. The sequence is that of Large ribosomal subunit protein bL20 from Francisella tularensis subsp. mediasiatica (strain FSC147).